The sequence spans 201 residues: Large ribosomal subunit protein uL4 (201 aa).

The segment at 51–73 (EVTGSGKKPWRQKGTGRARAGSV) is disordered.

This sequence belongs to the universal ribosomal protein uL4 family. In terms of assembly, part of the 50S ribosomal subunit.

Its function is as follows. One of the primary rRNA binding proteins, this protein initially binds near the 5'-end of the 23S rRNA. It is important during the early stages of 50S assembly. It makes multiple contacts with different domains of the 23S rRNA in the assembled 50S subunit and ribosome. Forms part of the polypeptide exit tunnel. In Erwinia tasmaniensis (strain DSM 17950 / CFBP 7177 / CIP 109463 / NCPPB 4357 / Et1/99), this protein is Large ribosomal subunit protein uL4.